A 703-amino-acid chain; its full sequence is Prolyl 3-hydroxylase 2 (703 aa).

The first 21 residues, 1–21 (MRESTWVSLLLLLLLPAPQRG), serve as a signal peptide directing secretion. The tract at residues 18–40 (PQRGGPQDGRGSPEPEPERGPLQ) is disordered. 4 TPR repeats span residues 42 to 75 (FDLLYASGVAAYYSGDYEGAVRDLEAALRSHRRL), 144 to 177 (RVPYNYLQRAYIKLNQLDKAMEAAHTFFMANPEH), 205 to 238 (HLESYNAGVKHYEADDFEAAIKYFEQALREYFNE), and 301 to 334 (PLHYDYLQFAYYRVGEYVKALECAKAYLMFHPDD). N-linked (GlcNAc...) asparagine glycans are attached at residues Asn444, Asn455, and Asn544. The 115-residue stretch at 552-666 (THMVCRTALS…RCAVALWFTL (115 aa)) folds into the Fe2OG dioxygenase domain. Residues His575, Asp577, and His647 each coordinate Fe cation. The active site involves Arg657. A Prevents secretion from ER motif is present at residues 700 to 703 (KDEL).

Belongs to the leprecan family. It depends on Fe cation as a cofactor. L-ascorbate serves as cofactor. In terms of tissue distribution, detected at low levels in cartilage.

The protein resides in the endoplasmic reticulum. It localises to the sarcoplasmic reticulum. Its subcellular location is the golgi apparatus. The enzyme catalyses L-prolyl-[collagen] + 2-oxoglutarate + O2 = trans-3-hydroxy-L-prolyl-[collagen] + succinate + CO2. Functionally, prolyl 3-hydroxylase that catalyzes the post-translational formation of 3-hydroxyproline on collagens. Contributes to proline 3-hydroxylation of collagen COL4A1 and COL1A1 in tendons, the eye sclera and in the eye lens capsule. Has high activity with the type IV collagen COL4A1, and lower activity with COL1A1. Catalyzes hydroxylation of the first Pro in Gly-Pro-Hyp sequences where Hyp is 4-hydroxyproline. Has no activity on substrates that lack 4-hydroxyproline in the third position. The polypeptide is Prolyl 3-hydroxylase 2 (Rattus norvegicus (Rat)).